The chain runs to 627 residues: Asparagine synthetase domain-containing protein 1 (627 aa).

Cysteine 2 acts as the For GATase activity in catalysis. Residues 2–184 enclose the Glutamine amidotransferase type-2 domain; sequence CGICCSVSFS…ASGIFQIDLN (183 aa). Residues 308–597 enclose the Asparagine synthetase domain; sequence ASKEVLKTCS…GLPASALLPK (290 aa). The interval 373–404 is disordered; the sequence is QQNHHEIPSEESSQSPAADEGPGEAEVPDRVT.

The sequence is that of Asparagine synthetase domain-containing protein 1 (Asnsd1) from Mus musculus (Mouse).